Here is a 247-residue protein sequence, read N- to C-terminus: MEQFKGLQKSLYIWTDSADLDKRVEQLKTATGGEVAVENVHRLSFSSYANSSFDLIVIECAQLTDNYVKLLHMLKPSGKLHLFSFIGPASSLLQEIKLSGFINCSEGTDTLTAEKPGYETGSSARLSFAKKNASALNVWKISGDDEELIDEEDLLDEEDKQKPDPAGLKVCSTTGKRKACKNCSCGLAEELESEKQTATASENAKSSCGNCYLGDAFRCSTCPYLGMPAFKPGEKVQLADNLLKSDI.

The segment at 4-128 (FKGLQKSLYI…ETGSSARLSF (125 aa)) is N-terminal SAM-like domain. Residues 129-160 (AKKNASALNVWKISGDDEELIDEEDLLDEEDK) are linker. Positions 171, 180, 183, and 185 each coordinate [2Fe-2S] cluster. The interval 171-185 (CSTTGKRKACKNCSC) is fe-S binding site A. Residues Cys-208, Cys-211, Cys-219, and Cys-222 each coordinate [4Fe-4S] cluster. 2 short sequence motifs (cx2C motif) span residues 208–211 (CGNC) and 219–222 (CSTC). The fe-S binding site B stretch occupies residues 208-222 (CGNCYLGDAFRCSTC).

This sequence belongs to the anamorsin family. Monomer. The cofactor is [2Fe-2S] cluster. [4Fe-4S] cluster is required as a cofactor.

The protein localises to the cytoplasm. The protein resides in the mitochondrion intermembrane space. Component of the cytosolic iron-sulfur (Fe-S) protein assembly (CIA) machinery. Required for the maturation of extramitochondrial Fe-S proteins. Part of an electron transfer chain functioning in an early step of cytosolic Fe-S biogenesis, facilitating the de novo assembly of a [4Fe-4S] cluster on the cytosolic Fe-S scaffold complex. Electrons are transferred from NADPH via a FAD- and FMN-containing diflavin oxidoreductase. Together with the diflavin oxidoreductase, also required for the assembly of the diferric tyrosyl radical cofactor of ribonucleotide reductase (RNR), probably by providing electrons for reduction during radical cofactor maturation in the catalytic small subunit. This is Anamorsin homolog from Drosophila persimilis (Fruit fly).